Reading from the N-terminus, the 747-residue chain is Endoglucanase C (747 aa).

A signal peptide spans 1–37; the sequence is MGHVTSPSKRYPASFKRAGSILGVSIALAAFSNVAAA. Positions 38–136 constitute a CBM2 domain; it reads GCEYVVTNSW…TVNGAACTGG (99 aa). Intrachain disulfides connect Cys-39–Cys-133, Cys-183–Cys-214, and Cys-193–Cys-208. The 30-residue stretch at 182 to 211 folds into the CBM10 domain; that stretch reads QCNWYGTLYPLCVSTTSGWGYENNRSCISP. The disordered stretch occupies residues 226–283; that stretch reads GSSSPSSISSSSVRSSSSSSVVPPSSSSSSSVPSSSSSSVSSSSVVSSSSSSVSVPGT. Low complexity predominate over residues 227-281; it reads SSSPSSISSSSVRSSSSSSVVPPSSSSSSSVPSSSSSSVSSSSVVSSSSSSVSVP. Residues 280–747 form a catalytic region; sequence VPGTGVFRVN…TQLLHNMWGL (468 aa). Glu-502 serves as the catalytic Proton donor. Glu-652 functions as the Nucleophile in the catalytic mechanism.

The protein belongs to the glycosyl hydrolase 5 (cellulase A) family.

The enzyme catalyses Endohydrolysis of (1-&gt;4)-beta-D-glucosidic linkages in cellulose, lichenin and cereal beta-D-glucans.. This is Endoglucanase C (celC) from Cellvibrio japonicus (strain Ueda107) (Pseudomonas fluorescens subsp. cellulosa).